Here is a 512-residue protein sequence, read N- to C-terminus: GMP synthase [glutamine-hydrolyzing] (512 aa).

Positions 7 to 197 (TIIVLDFGSQ…VFGVCGCSEG (191 aa)) constitute a Glutamine amidotransferase type-1 domain. Residue C84 is the Nucleophile of the active site. Residues H171 and E173 contribute to the active site. In terms of domain architecture, GMPS ATP-PPase spans 198–387 (WNMENFIEVE…LGIPDEIVWR (190 aa)). 225 to 231 (SGGVDSS) is an ATP binding site.

As to quaternary structure, homodimer.

The enzyme catalyses XMP + L-glutamine + ATP + H2O = GMP + L-glutamate + AMP + diphosphate + 2 H(+). The protein operates within purine metabolism; GMP biosynthesis; GMP from XMP (L-Gln route): step 1/1. Functionally, catalyzes the synthesis of GMP from XMP. This chain is GMP synthase [glutamine-hydrolyzing], found in Bacillus anthracis.